Reading from the N-terminus, the 149-residue chain is Flagellar assembly factor FliW (149 aa).

The protein belongs to the FliW family. Interacts with translational regulator CsrA and flagellin(s).

The protein resides in the cytoplasm. Its function is as follows. Acts as an anti-CsrA protein, binds CsrA and prevents it from repressing translation of its target genes, one of which is flagellin. Binds to flagellin and participates in the assembly of the flagellum. This is Flagellar assembly factor FliW from Thermotoga neapolitana (strain ATCC 49049 / DSM 4359 / NBRC 107923 / NS-E).